We begin with the raw amino-acid sequence, 611 residues long: Protein PES4 (611 aa).

Residues 37-81 form a disordered region; sequence FNPVVTPIRPDDYHEKTSRSSSSSHSDSPEFLRINNNKSGHKNGK. The segment covering 45 to 54 has biased composition (basic and acidic residues); that stretch reads RPDDYHEKTS. 4 consecutive RRM domains span residues 91–169, 179–247, 303–379, and 393–471; these read VPLF…PSLR, TNVF…GKKI, NSIF…RAQD, and STLF…WERQ.

The protein resides in the nucleus. The protein is Protein PES4 (PES4) of Saccharomyces cerevisiae (strain ATCC 204508 / S288c) (Baker's yeast).